The chain runs to 360 residues: Aminomethyltransferase (360 aa).

The protein belongs to the GcvT family. In terms of assembly, the glycine cleavage system is composed of four proteins: P, T, L and H.

The enzyme catalyses N(6)-[(R)-S(8)-aminomethyldihydrolipoyl]-L-lysyl-[protein] + (6S)-5,6,7,8-tetrahydrofolate = N(6)-[(R)-dihydrolipoyl]-L-lysyl-[protein] + (6R)-5,10-methylene-5,6,7,8-tetrahydrofolate + NH4(+). The glycine cleavage system catalyzes the degradation of glycine. The polypeptide is Aminomethyltransferase (Legionella pneumophila (strain Lens)).